The chain runs to 624 residues: Coagulation factor XI (624 aa).

The N-terminal stretch at 1–18 (MTSLHQVLYFIFFASVSS) is a signal peptide. 4 consecutive Apple domains span residues 20–103 (CVTK…FKQC), 110–193 (CSKD…LKSC), 200–283 (CIRD…LQHC), and 291–376 (CHPS…LRLC). 17 cysteine pairs are disulfide-bonded: Cys-20-Cys-103, Cys-46-Cys-76, Cys-50-Cys-56, Cys-110-Cys-193, Cys-136-Cys-165, Cys-140-Cys-146, Cys-200-Cys-283, Cys-226-Cys-255, Cys-230-Cys-236, Cys-291-Cys-376, Cys-317-Cys-348, Cys-321-Cys-327, Cys-382-Cys-499, Cys-415-Cys-431, Cys-513-Cys-580, Cys-544-Cys-559, and Cys-570-Cys-598. Asn-90 and Asn-126 each carry an N-linked (GlcNAc...) asparagine glycan. N-linked (GlcNAc...) asparagine glycosylation is present at Asn-297. The region spanning 390 to 622 (VVGGAASVHG…YVDWILEKTQ (233 aa)) is the Peptidase S1 domain. His-430 serves as the catalytic Charge relay system. A glycan (N-linked (GlcNAc...) asparagine) is linked at Asn-449. Catalysis depends on Asp-479, which acts as the Charge relay system. N-linked (GlcNAc...) asparagine glycosylation occurs at Asn-490. Residue 547 to 550 (RYRR) coordinates heparin. Ser-574 functions as the Charge relay system in the catalytic mechanism.

The protein belongs to the peptidase S1 family. Plasma kallikrein subfamily. Homodimer; disulfide-linked. After activation the heavy and light chains are also linked by a disulfide bond. Interacts (activated) with F9 (inactive and activated) in calcium-dependent manner. Forms a heterodimer with SERPINA5. Post-translationally, activated by factor XIIa (or XII), which cleaves each polypeptide after Arg-389 into the light chain, which contains the active site, and the heavy chain, which associates with high molecular weight (HMW) kininogen. Activated by F12 (activated); the presence of negatively charged surfaces accelerates activation. Activated by F2 (thrombin); the presence of negatively charged surfaces, such as polyphosphate and dextran sulfate, strongly accelerates activation. Autoactivated; the presence of negatively charged surfaces, such as polyphosphate and dextran sulfate, accelerates autoactivation and autolysis. In terms of processing, N-glycosylated on both chains. N-glycosylated sites mainly consist of nonfucosylated sialylated biantennary (in high abundance) and/or triantennary (in low abundance) complex structures.

The protein resides in the secreted. It carries out the reaction Selective cleavage of Arg-|-Ala and Arg-|-Val bonds in factor IX to form factor IXa.. Inhibited by SERPINA5. Its function is as follows. Factor XI triggers the middle phase of the intrinsic pathway of blood coagulation by activating factor IX. This Mus musculus (Mouse) protein is Coagulation factor XI (F11).